The following is a 790-amino-acid chain: Cadherin-6 (790 aa).

The signal sequence occupies residues 1–18 (MRTYRYFLLLFWVGQPYP). A propeptide spanning residues 19–53 (TLSTPLSKRTSGFPAKKRALELSGNSKNELNRSKR) is cleaved from the precursor. Asn49 is a glycosylation site (N-linked (GlcNAc...) asparagine). Cadherin domains lie at 54-159 (SWMW…EPIF), 160-268 (TKEV…PPRF), 269-383 (PQST…PPVF), 384-486 (SKLA…DNAP), and 487-608 (EFAE…LIHP). Over 54-615 (SWMWNQFFLL…IHPTGLSTGA (562 aa)) the chain is Extracellular. A glycan (N-linked (GlcNAc...) asparagine) is linked at Asn255. Positions 259–288 (TDVNDNPPRFPQSTYQFKTPESSPPGTPIG) are disordered. Residues 269–279 (PQSTYQFKTPE) are compositionally biased toward polar residues. 4 N-linked (GlcNAc...) asparagine glycosylation sites follow: Asn399, Asn437, Asn455, and Asn536. Residues 616 to 636 (LVAILLCIVILLVTVVLFAAL) traverse the membrane as a helical segment. The Cytoplasmic segment spans residues 637–790 (RRQRKKEPLI…YGGVDSDKDS (154 aa)). Residues Ser786 and Ser790 each carry the phosphoserine modification.

In terms of tissue distribution, highly expressed in brain, cerebellum, and kidney. Lung, pancreas, and gastric mucosa show a weak expression. Also expressed in certain liver and kidney carcinomas.

Its subcellular location is the cell membrane. Its function is as follows. Cadherins are calcium-dependent cell adhesion proteins. They preferentially interact with themselves in a homophilic manner in connecting cells; cadherins may thus contribute to the sorting of heterogeneous cell types. The chain is Cadherin-6 (CDH6) from Homo sapiens (Human).